A 780-amino-acid chain; its full sequence is GATOR2 complex protein WDR24 (780 aa).

WD repeat units lie at residues 67-107, 113-153, 156-196, 200-240, 244-286, and 290-333; these read SLNF…RNKQ, EHKR…SVST, GQSE…RCER, AHNG…AKEI, QTIA…IPFA, and EHKD…IDRA. The C4-type zinc-finger motif lies at 708–730; the sequence is NCSNCKRPMSNKGWICDRCRQCA. Zn(2+) contacts are provided by Cys709, Cys712, Cys723, Cys726, Cys733, Cys736, Cys747, Cys750, His752, His755, His758, Cys769, Cys773, His775, and Cys777. An RING-type; atypical zinc finger spans residues 731 to 780; it reads SMCAVCHHVVKGLFVWCQGCCHGGHLQHIMNWMQNNCYCPAGCGHVCEYS.

The protein belongs to the WD repeat WDR24 family. As to quaternary structure, component of the GATOR2 subcomplex, composed of MIOS, SEC13, SEH1L, WDR24 and WDR59. The GATOR2 complex interacts with CASTOR1 and CASTOR2; the interaction is negatively regulated by arginine. The GATOR2 complex interacts with SESN1, SESN2 and SESN3; the interaction is negatively regulated by amino acids.

It localises to the lysosome membrane. It carries out the reaction S-ubiquitinyl-[E2 ubiquitin-conjugating enzyme]-L-cysteine + [acceptor protein]-L-lysine = [E2 ubiquitin-conjugating enzyme]-L-cysteine + N(6)-ubiquitinyl-[acceptor protein]-L-lysine.. The protein operates within protein modification; protein ubiquitination. Its activity is regulated as follows. The GATOR2 complex is negatively regulated by the upstream amino acid sensors CASTOR1 and SESN2, which sequester the GATOR2 complex in absence of amino acids. In the presence of abundant amino acids, GATOR2 is released from CASTOR1 and SESN2 and activated. Its function is as follows. Catalytic component of the GATOR2 complex, a multiprotein complex that acts as an activator of the amino acid-sensing branch of the mTORC1 signaling pathway. The GATOR2 complex indirectly activates mTORC1 through the inhibition of the GATOR1 subcomplex. GATOR2 probably acts as an E3 ubiquitin-protein ligase toward GATOR1. In the presence of abundant amino acids, the GATOR2 complex mediates ubiquitination of the NPRL2 core component of the GATOR1 complex, leading to GATOR1 inactivation. In the absence of amino acids, GATOR2 is inhibited, activating the GATOR1 complex. In addition to its role in regulation of the mTORC1 complex, promotes the acidification of lysosomes and facilitates autophagic flux. Within the GATOR2 complex, WDR24 constitutes the catalytic subunit that mediates 'Lys-6'-linked ubiquitination of NPRL2. The sequence is that of GATOR2 complex protein WDR24 from Xenopus laevis (African clawed frog).